The following is a 376-amino-acid chain: tRNA-specific 2-thiouridylase MnmA (376 aa).

ATP is bound by residues 10-17 and Met36; that span reads GMSGGVDS. Residues 96–98 are interaction with target base in tRNA; sequence NPD. Cys101 serves as the catalytic Nucleophile. Cysteines 101 and 198 form a disulfide. Residue Gly125 participates in ATP binding. An interaction with tRNA region spans residues 148–150; that stretch reads KDQ. Cys198 (cysteine persulfide intermediate) is an active-site residue. The interaction with tRNA stretch occupies residues 305–306; that stretch reads RY.

The protein belongs to the MnmA/TRMU family.

The protein localises to the cytoplasm. It carries out the reaction S-sulfanyl-L-cysteinyl-[protein] + uridine(34) in tRNA + AH2 + ATP = 2-thiouridine(34) in tRNA + L-cysteinyl-[protein] + A + AMP + diphosphate + H(+). Catalyzes the 2-thiolation of uridine at the wobble position (U34) of tRNA, leading to the formation of s(2)U34. The chain is tRNA-specific 2-thiouridylase MnmA from Protochlamydia amoebophila (strain UWE25).